A 177-amino-acid chain; its full sequence is Inner membrane protein p22 (177 aa).

Residues 1-7 are Intravirion-facing; it reads MFNIKMT. Residues 8 to 28 form a helical membrane-spanning segment; it reads ISTLLIALIILVIIILVVFLY. The Virion surface portion of the chain corresponds to 29-177; that stretch reads YKKQQPPKKV…IALPRNHKHA (149 aa).

Belongs to the asfivirus inner membrane protein p22 family.

It localises to the virion membrane. The protein localises to the host cell membrane. This Ornithodoros (relapsing fever ticks) protein is Inner membrane protein p22.